The sequence spans 459 residues: UDP-N-acetylmuramate--L-alanine ligase (459 aa).

ATP is bound at residue 118 to 124 (GTHGKTT).

This sequence belongs to the MurCDEF family.

Its subcellular location is the cytoplasm. It catalyses the reaction UDP-N-acetyl-alpha-D-muramate + L-alanine + ATP = UDP-N-acetyl-alpha-D-muramoyl-L-alanine + ADP + phosphate + H(+). Its pathway is cell wall biogenesis; peptidoglycan biosynthesis. Cell wall formation. The sequence is that of UDP-N-acetylmuramate--L-alanine ligase from Agathobacter rectalis (strain ATCC 33656 / DSM 3377 / JCM 17463 / KCTC 5835 / VPI 0990) (Eubacterium rectale).